The sequence spans 157 residues: SsrA-binding protein (157 aa).

The protein belongs to the SmpB family.

It localises to the cytoplasm. Its function is as follows. Required for rescue of stalled ribosomes mediated by trans-translation. Binds to transfer-messenger RNA (tmRNA), required for stable association of tmRNA with ribosomes. tmRNA and SmpB together mimic tRNA shape, replacing the anticodon stem-loop with SmpB. tmRNA is encoded by the ssrA gene; the 2 termini fold to resemble tRNA(Ala) and it encodes a 'tag peptide', a short internal open reading frame. During trans-translation Ala-aminoacylated tmRNA acts like a tRNA, entering the A-site of stalled ribosomes, displacing the stalled mRNA. The ribosome then switches to translate the ORF on the tmRNA; the nascent peptide is terminated with the 'tag peptide' encoded by the tmRNA and targeted for degradation. The ribosome is freed to recommence translation, which seems to be the essential function of trans-translation. This is SsrA-binding protein from Levilactobacillus brevis (strain ATCC 367 / BCRC 12310 / CIP 105137 / JCM 1170 / LMG 11437 / NCIMB 947 / NCTC 947) (Lactobacillus brevis).